The sequence spans 99 residues: UPF0213 protein RBAM_000440 (99 aa).

A GIY-YIG domain is found at 4–79 (NSHFFYVLLC…KQLTRKKKEQ (76 aa)).

This sequence belongs to the UPF0213 family.

This chain is UPF0213 protein RBAM_000440, found in Bacillus velezensis (strain DSM 23117 / BGSC 10A6 / LMG 26770 / FZB42) (Bacillus amyloliquefaciens subsp. plantarum).